The following is a 139-amino-acid chain: D-ribose pyranase (139 aa).

Residue His20 is the Proton donor of the active site. Substrate-binding positions include Asp28, His106, and 128–130 (YAN).

The protein belongs to the RbsD / FucU family. RbsD subfamily. Homodecamer.

It is found in the cytoplasm. The catalysed reaction is beta-D-ribopyranose = beta-D-ribofuranose. The protein operates within carbohydrate metabolism; D-ribose degradation; D-ribose 5-phosphate from beta-D-ribopyranose: step 1/2. Functionally, catalyzes the interconversion of beta-pyran and beta-furan forms of D-ribose. This Aeromonas salmonicida (strain A449) protein is D-ribose pyranase.